The primary structure comprises 352 residues: Protein Wnt-3a (352 aa).

An N-terminal signal peptide occupies residues 1–18; sequence MAPLGYLLVLCSLKQALG. Cystine bridges form between cysteine 77/cysteine 88, cysteine 128/cysteine 136, cysteine 138/cysteine 155, cysteine 203/cysteine 217, cysteine 205/cysteine 212, cysteine 281/cysteine 312, cysteine 297/cysteine 307, cysteine 311/cysteine 351, cysteine 327/cysteine 342, cysteine 329/cysteine 339, and cysteine 334/cysteine 335. A glycan (N-linked (GlcNAc...) asparagine) is linked at asparagine 87. Residue serine 209 is the site of O-palmitoleoyl serine; by PORCN attachment. The N-linked (GlcNAc...) asparagine glycan is linked to asparagine 298.

It belongs to the Wnt family. As to quaternary structure, forms a soluble 1:1 complex with AFM; this prevents oligomerization and is required for prolonged biological activity. The complex with AFM may represent the physiological form in body fluids. Homooligomer; disulfide-linked, leading to inactivation. Interacts with APCDD1 and WLS. Component of the Wnt-Fzd-LRP5-LRP6 signaling complex that contains a WNT protein, a FZD protein and LRP5 or LRP6. Interacts directly in the complex with LRP6. Interacts with PORCN. Interacts with glypican GPC3. Interacts with PKD1 (via extracellular domain). Interacts with FZD5. Proteolytic processing by TIKI1 and TIKI2 promotes oxidation and formation of large disulfide-bond oligomers, leading to inactivation of WNT3A. Post-translationally, disulfide bonds have critical and distinct roles in secretion and activity. Loss of each conserved cysteine in WNT3A results in high molecular weight oxidized Wnt oligomers, which are formed through inter-Wnt disulfide bonding. In terms of processing, palmitoleoylation by PORCN is required for efficient binding to frizzled receptors. Palmitoleoylation is required for proper trafficking to cell surface, vacuolar acidification is critical to release palmitoleoylated WNT3A from WLS in secretory vesicles. Depalmitoleoylated by NOTUM, leading to inhibit Wnt signaling pathway, possibly by promoting disulfide bond formation and oligomerization. In terms of tissue distribution, dorsal portion of the neural tube (developing roof plate), and mesenchyme tissue surrounding the umbilical veins.

It is found in the secreted. Its subcellular location is the extracellular space. The protein localises to the extracellular matrix. Functionally, ligand for members of the frizzled family of seven transmembrane receptors. Functions in the canonical Wnt signaling pathway that results in activation of transcription factors of the TCF/LEF family. Required for normal embryonic mesoderm development and formation of caudal somites. Required for normal morphogenesis of the developing neural tube. Mediates self-renewal of the stem cells at the bottom on intestinal crypts (in vitro). In Mus musculus (Mouse), this protein is Protein Wnt-3a (Wnt3a).